Here is a 904-residue protein sequence, read N- to C-terminus: Alanine--tRNA ligase (904 aa).

The Zn(2+) site is built by His603, His607, Cys707, and His711.

The protein belongs to the class-II aminoacyl-tRNA synthetase family. Requires Zn(2+) as cofactor.

It is found in the cytoplasm. The catalysed reaction is tRNA(Ala) + L-alanine + ATP = L-alanyl-tRNA(Ala) + AMP + diphosphate. Catalyzes the attachment of alanine to tRNA(Ala) in a two-step reaction: alanine is first activated by ATP to form Ala-AMP and then transferred to the acceptor end of tRNA(Ala). Also edits incorrectly charged Ser-tRNA(Ala) and Gly-tRNA(Ala) via its editing domain. The sequence is that of Alanine--tRNA ligase from Sulfurisphaera tokodaii (strain DSM 16993 / JCM 10545 / NBRC 100140 / 7) (Sulfolobus tokodaii).